The primary structure comprises 239 residues: Large ribosomal subunit protein bL25 (239 aa).

The disordered stretch occupies residues 217-239 (IKAEAHAAEGTQAEGSTEEGQQQ). Positions 229–239 (AEGSTEEGQQQ) are enriched in polar residues.

This sequence belongs to the bacterial ribosomal protein bL25 family. CTC subfamily. In terms of assembly, part of the 50S ribosomal subunit; part of the 5S rRNA/L5/L18/L25 subcomplex. Contacts the 5S rRNA. Binds to the 5S rRNA independently of L5 and L18.

This is one of the proteins that binds to the 5S RNA in the ribosome where it forms part of the central protuberance. The polypeptide is Large ribosomal subunit protein bL25 (Deinococcus deserti (strain DSM 17065 / CIP 109153 / LMG 22923 / VCD115)).